The following is a 167-amino-acid chain: Protein-export protein SecB (167 aa).

This sequence belongs to the SecB family. In terms of assembly, homotetramer, a dimer of dimers. One homotetramer interacts with 1 SecA dimer.

It is found in the cytoplasm. One of the proteins required for the normal export of preproteins out of the cell cytoplasm. It is a molecular chaperone that binds to a subset of precursor proteins, maintaining them in a translocation-competent state. It also specifically binds to its receptor SecA. This Wolbachia pipientis subsp. Culex pipiens (strain wPip) protein is Protein-export protein SecB.